Reading from the N-terminus, the 522-residue chain is Poly(A) polymerase (522 aa).

ATP is bound by residues 63–65 (YGS), 76–78 (DID), Asp-130, Lys-193, Tyr-202, and 211–212 (GI). 3 residues coordinate Mg(2+): Asp-76, Asp-78, and Asp-130. The tract at residues 475-522 (QLKAKEENSIPNEEKKEQLKKEMKQEANTIVKNSSTDDDFMKRFTRKN) is disordered. The segment covering 476–499 (LKAKEENSIPNEEKKEQLKKEMKQ) has biased composition (basic and acidic residues).

It belongs to the poly(A) polymerase family. Mg(2+) serves as cofactor. Requires Mn(2+) as cofactor.

Its subcellular location is the cytoplasm. The protein resides in the nucleus. It carries out the reaction RNA(n) + ATP = RNA(n)-3'-adenine ribonucleotide + diphosphate. Polymerase that creates the 3'-poly(A) tail of mRNA's. May acquire specificity through interaction with a cleavage and polyadenylation factor. This Entamoeba histolytica (strain ATCC 30459 / HM-1:IMSS / ABRM) protein is Poly(A) polymerase.